Here is a 162-residue protein sequence, read N- to C-terminus: Caveolin-2 (162 aa).

Topologically, residues 1-86 (MGLETEKADV…FEISKYVMYK (86 aa)) are cytoplasmic. Y19 is subject to Phosphotyrosine; by SRC. Residues S20 and S23 each carry the phosphoserine modification. Phosphotyrosine; by SRC is present on Y27. At S36 the chain carries Phosphoserine. The helical intramembrane region spans 87–107 (FLTVFLAIPLAFIAGILFATL). Residues 108 to 162 (SCLHIWILMPFVKTCLMVLPSVQTIWKSVTDVIIAPLCTSVGRSFSSVSLQLSQD) lie on the Cytoplasmic side of the membrane.

This sequence belongs to the caveolin family. Monomer or homodimer. Interacts with CAV1; the interaction forms a stable heterooligomeric complex that is required for targeting to lipid rafts and for caveolae formation. Tyrosine phosphorylated forms do not form heterooligomers with the Tyr-19-phosphorylated form existing as a monomer or dimer, and the Tyr-27-form as a monomer only. Interacts (tyrosine phosphorylated form) with the SH2 domain-containing proteins, RASA1, NCK1 and SRC. Interacts (tyrosine phosphorylated form) with INSR, the interaction (Tyr-27-phosphorylated form) is increased on insulin stimulation. Interacts (Tyr-19 phosphorylated form) with MAPK1 (phosphorylated form); the interaction, promoted by insulin, leads to nuclear location and MAPK1 activation. Interacts with STAT3; the interaction is increased on insulin-induced tyrosine phosphorylation leading to STAT activation. In terms of processing, phosphorylated on serine and tyrosine residues. CAV1 promotes phosphorylation on Ser-23 which then targets the complex to the plasma membrane, lipid rafts and caveolae. Phosphorylation on Ser-36 appears to modulate mitosis in endothelial cells. Phosphorylation on both Tyr-19 and Tyr-27 is required for insulin-induced 'Ser-727' phosphorylation of STAT3 and its activation. Phosphorylation on Tyr-19 is required for insulin-induced phosphorylation of MAPK1 and DNA binding of STAT3. Tyrosine phosphorylation is induced by both EGF and insulin (By. similarity).

Its subcellular location is the nucleus. It localises to the cytoplasm. It is found in the golgi apparatus membrane. The protein resides in the cell membrane. The protein localises to the membrane. Its subcellular location is the caveola. Functionally, may act as a scaffolding protein within caveolar membranes. Interacts directly with G-protein alpha subunits and can functionally regulate their activity. Acts as an accessory protein in conjunction with CAV1 in targeting to lipid rafts and driving caveolae formation. The Ser-36 phosphorylated form has a role in modulating mitosis in endothelial cells. Positive regulator of cellular mitogenesis of the MAPK signaling pathway. Required for the insulin-stimulated nuclear translocation and activation of MAPK1 and STAT3, and the subsequent regulation of cell cycle progression. The polypeptide is Caveolin-2 (CAV2) (Pongo abelii (Sumatran orangutan)).